The chain runs to 268 residues: Glycine/sarcosine N-methyltransferase (268 aa).

S-adenosyl-L-methionine is bound by residues Y26, W34, R43, A67, D88, 114 to 115 (DW), and L132. Substrate contacts are provided by N134, R167, and Y206.

It belongs to the class I-like SAM-binding methyltransferase superfamily. Glycine N-methyltransferase family. In terms of assembly, monomer.

It carries out the reaction glycine + 2 S-adenosyl-L-methionine = N,N-dimethylglycine + 2 S-adenosyl-L-homocysteine + 2 H(+). The catalysed reaction is glycine + S-adenosyl-L-methionine = sarcosine + S-adenosyl-L-homocysteine + H(+). It catalyses the reaction sarcosine + S-adenosyl-L-methionine = N,N-dimethylglycine + S-adenosyl-L-homocysteine + H(+). Its pathway is amine and polyamine biosynthesis; betaine biosynthesis via glycine pathway; betaine from glycine: step 1/3. It functions in the pathway amine and polyamine biosynthesis; betaine biosynthesis via glycine pathway; betaine from glycine: step 2/3. Its activity is regulated as follows. p-chloromercuribenzoic acid inhibits more than 95% of the GSMT activities on glycine and sarcosine, and S-adenosylhomocysteine (AdoHcy) inhibits completely GSMT activities. In terms of biological role, catalyzes the methylation of glycine and sarcosine to sarcosine and dimethylglycine, respectively, with S-adenosylmethionine (AdoMet) acting as the methyl donor. It has strict specificity for glycine and sarcosine as the methyl group acceptors. The chain is Glycine/sarcosine N-methyltransferase from Halorhodospira halochloris (Ectothiorhodospira halochloris).